We begin with the raw amino-acid sequence, 456 residues long: GTPase Der (456 aa).

2 EngA-type G domains span residues 2–167 and 176–351; these read LKVA…DQFG and ATFC…AQLK. GTP contacts are provided by residues 8–15, 55–59, 118–121, 182–189, 229–233, and 294–297; these read GKPNVGKS, DTGGL, NKIE, DTAGI, and NKWD. The KH-like domain occupies 352 to 436; the sequence is IKISTSLLND…PITLYFKSKN (85 aa).

The protein belongs to the TRAFAC class TrmE-Era-EngA-EngB-Septin-like GTPase superfamily. EngA (Der) GTPase family. Associates with the 50S ribosomal subunit.

GTPase that plays an essential role in the late steps of ribosome biogenesis. This chain is GTPase Der, found in Mycoplasmoides gallisepticum (strain R(low / passage 15 / clone 2)) (Mycoplasma gallisepticum).